Reading from the N-terminus, the 116-residue chain is Large ribosomal subunit protein bL20c (116 aa).

It belongs to the bacterial ribosomal protein bL20 family.

Its subcellular location is the plastid. The protein resides in the chloroplast. Binds directly to 23S ribosomal RNA and is necessary for the in vitro assembly process of the 50S ribosomal subunit. It is not involved in the protein synthesizing functions of that subunit. This chain is Large ribosomal subunit protein bL20c, found in Cyanidioschyzon merolae (strain NIES-3377 / 10D) (Unicellular red alga).